Consider the following 268-residue polypeptide: 1D-myo-inositol 2-acetamido-2-deoxy-alpha-D-glucopyranoside deacetylase (268 aa).

Residues His7, Asp10, and His142 each contribute to the Zn(2+) site.

Belongs to the MshB deacetylase family. Requires Zn(2+) as cofactor.

It catalyses the reaction 1D-myo-inositol 2-acetamido-2-deoxy-alpha-D-glucopyranoside + H2O = 1D-myo-inositol 2-amino-2-deoxy-alpha-D-glucopyranoside + acetate. Catalyzes the deacetylation of 1D-myo-inositol 2-acetamido-2-deoxy-alpha-D-glucopyranoside (GlcNAc-Ins) in the mycothiol biosynthesis pathway. In Saccharomonospora viridis (strain ATCC 15386 / DSM 43017 / JCM 3036 / CCUG 5913 / NBRC 12207 / NCIMB 9602 / P101) (Thermoactinomyces viridis), this protein is 1D-myo-inositol 2-acetamido-2-deoxy-alpha-D-glucopyranoside deacetylase.